Consider the following 122-residue polypeptide: Flowering-promoting factor 1-like protein 3 (122 aa).

The interval 16 to 36 (ENPGSEESSSAGDGGGGGRRK) is disordered.

It belongs to the FPF1 family.

The polypeptide is Flowering-promoting factor 1-like protein 3 (Oryza sativa subsp. japonica (Rice)).